The chain runs to 366 residues: Mitogen-activated protein kinase 13 (366 aa).

Positions 25-308 (YVSLTHIGSG…ASQALAHPFF (284 aa)) constitute a Protein kinase domain. 31–39 (IGSGAYGSV) is a binding site for ATP. Phosphoserine is present on Ser-47. Lys-54 is a binding site for ATP. Asp-150 functions as the Proton acceptor in the catalytic mechanism. Thr-180 bears the Phosphothreonine; by MAP2K3, MAP2K4, MAP2K6 and MAP2K7 mark. Residues 180 to 182 (TGY) carry the TXY motif. Tyr-182 carries the phosphotyrosine; by MAP2K3, MAP2K4, MAP2K6 and MAP2K7 modification. Ser-350 carries the post-translational modification Phosphoserine.

This sequence belongs to the protein kinase superfamily. CMGC Ser/Thr protein kinase family. MAP kinase subfamily. As to quaternary structure, interacts with MAPK8IP2. Mg(2+) is required as a cofactor. In terms of processing, dually phosphorylated on Thr-180 and Tyr-182 by MAP2K3/MKK3, MAP2K4/MKK4, MAP2K6/MKK6 and MAP2K7/MKK7, which activates the enzyme. Dephosphorylated by dual specificity phosphatase DUSP1.

It carries out the reaction L-seryl-[protein] + ATP = O-phospho-L-seryl-[protein] + ADP + H(+). It catalyses the reaction L-threonyl-[protein] + ATP = O-phospho-L-threonyl-[protein] + ADP + H(+). Activated by phosphorylation on threonine and tyrosine by dual specificity kinases, MAP2K3/MKK3 MAP2K6/MKK6, MAP2K4/MKK4 and MAP2K7/MKK7. Activation by ultraviolet radiation, hyperosmotic shock, anisomycin or by TNF-alpha is mediated by MAP2K3/MKK3. Inhibited by dual specificity phosphatase DUSP1. Its function is as follows. Serine/threonine kinase which acts as an essential component of the MAP kinase signal transduction pathway. MAPK13 is one of the four p38 MAPKs which play an important role in the cascades of cellular responses evoked by extracellular stimuli such as pro-inflammatory cytokines or physical stress leading to direct activation of transcription factors such as ELK1 and ATF2. Accordingly, p38 MAPKs phosphorylate a broad range of proteins and it has been estimated that they may have approximately 200 to 300 substrates each. MAPK13 is one of the less studied p38 MAPK isoforms. Some of the targets are downstream kinases such as MAPKAPK2, which are activated through phosphorylation and further phosphorylate additional targets. Plays a role in the regulation of protein translation by phosphorylating and inactivating EEF2K. Involved in cytoskeletal remodeling through phosphorylation of MAPT and STMN1. Mediates UV irradiation induced up-regulation of the gene expression of CXCL14. Plays an important role in the regulation of epidermal keratinocyte differentiation, apoptosis and skin tumor development. Phosphorylates the transcriptional activator MYB in response to stress which leads to rapid MYB degradation via a proteasome-dependent pathway. MAPK13 also phosphorylates and down-regulates PRKD1 during regulation of insulin secretion in pancreatic beta cells. This chain is Mitogen-activated protein kinase 13 (MAPK13), found in Bos taurus (Bovine).